The following is a 348-amino-acid chain: Galactose-1-phosphate uridylyltransferase (348 aa).

A UDP-alpha-D-glucose-binding site is contributed by 28–31; it reads RAKR. Cysteine 52 and cysteine 55 together coordinate Zn(2+). UDP-alpha-D-glucose-binding positions include valine 61 and 77 to 78; that span reads ND. Position 115 (histidine 115) interacts with Zn(2+). UDP-alpha-D-glucose is bound by residues asparagine 153 and 159 to 161; that span reads GCS. A Zn(2+)-binding site is contributed by histidine 164. The Tele-UMP-histidine intermediate role is filled by histidine 166. Glutamine 168 serves as a coordination point for UDP-alpha-D-glucose. Fe cation contacts are provided by glutamate 182, histidine 281, histidine 296, and histidine 298. UDP-alpha-D-glucose is bound by residues 311–312, 316–317, and glutamine 323; these read KF and YE.

This sequence belongs to the galactose-1-phosphate uridylyltransferase type 1 family. Requires Zn(2+) as cofactor.

The catalysed reaction is alpha-D-galactose 1-phosphate + UDP-alpha-D-glucose = alpha-D-glucose 1-phosphate + UDP-alpha-D-galactose. Its pathway is carbohydrate metabolism; galactose metabolism. This chain is Galactose-1-phosphate uridylyltransferase (galT), found in Salmonella typhimurium (strain LT2 / SGSC1412 / ATCC 700720).